The chain runs to 370 residues: Glutamate 5-kinase (370 aa).

Residue K13 participates in ATP binding. Positions 52, 139, and 151 each coordinate substrate. ATP-binding positions include 171–172 (SD) and 211–217 (SGGMKSK). In terms of domain architecture, PUA spans 275-353 (KGELVLDRGA…AEIEAVLGYR (79 aa)).

This sequence belongs to the glutamate 5-kinase family.

It localises to the cytoplasm. The enzyme catalyses L-glutamate + ATP = L-glutamyl 5-phosphate + ADP. It participates in amino-acid biosynthesis; L-proline biosynthesis; L-glutamate 5-semialdehyde from L-glutamate: step 1/2. Functionally, catalyzes the transfer of a phosphate group to glutamate to form L-glutamate 5-phosphate. The polypeptide is Glutamate 5-kinase (Thermus thermophilus (strain ATCC BAA-163 / DSM 7039 / HB27)).